Consider the following 250-residue polypeptide: NAD-dependent protein deacylase (250 aa).

A Deacetylase sirtuin-type domain is found at 1-248 (MLGEVSKILA…PKLVEEIRRI (248 aa)). An NAD(+)-binding site is contributed by 20–39 (GAGISAESGIPTFRGKDGLW). Substrate-binding residues include Tyr-64 and Arg-67. NAD(+) is bound at residue 98-101 (QNVD). The active-site Proton acceptor is His-116. Zn(2+)-binding residues include Cys-124, Cys-127, Cys-150, and Cys-153. Residues 190–192 (GTS), 216–218 (NIE), and Ala-234 contribute to the NAD(+) site.

This sequence belongs to the sirtuin family. Class III subfamily. Requires Zn(2+) as cofactor.

The protein resides in the cytoplasm. It catalyses the reaction N(6)-acetyl-L-lysyl-[protein] + NAD(+) + H2O = 2''-O-acetyl-ADP-D-ribose + nicotinamide + L-lysyl-[protein]. The catalysed reaction is N(6)-succinyl-L-lysyl-[protein] + NAD(+) + H2O = 2''-O-succinyl-ADP-D-ribose + nicotinamide + L-lysyl-[protein]. In terms of biological role, NAD-dependent lysine deacetylase and desuccinylase that specifically removes acetyl and succinyl groups on target proteins. Modulates the activities of several proteins which are inactive in their acylated form. Deacetylates the N-terminal lysine residue of Alba, the major archaeal chromatin protein and that, in turn, increases Alba's DNA binding affinity, thereby repressing transcription. The protein is NAD-dependent protein deacylase of Pyrococcus furiosus (strain ATCC 43587 / DSM 3638 / JCM 8422 / Vc1).